Reading from the N-terminus, the 357-residue chain is Chorismate synthase (357 aa).

Residue R48 participates in NADP(+) binding. FMN is bound by residues 125–127 (RSS), 238–239 (NA), G282, 297–301 (KPTSS), and R323.

The protein belongs to the chorismate synthase family. Homotetramer. It depends on FMNH2 as a cofactor.

It carries out the reaction 5-O-(1-carboxyvinyl)-3-phosphoshikimate = chorismate + phosphate. It participates in metabolic intermediate biosynthesis; chorismate biosynthesis; chorismate from D-erythrose 4-phosphate and phosphoenolpyruvate: step 7/7. Functionally, catalyzes the anti-1,4-elimination of the C-3 phosphate and the C-6 proR hydrogen from 5-enolpyruvylshikimate-3-phosphate (EPSP) to yield chorismate, which is the branch point compound that serves as the starting substrate for the three terminal pathways of aromatic amino acid biosynthesis. This reaction introduces a second double bond into the aromatic ring system. This chain is Chorismate synthase, found in Gluconacetobacter diazotrophicus (strain ATCC 49037 / DSM 5601 / CCUG 37298 / CIP 103539 / LMG 7603 / PAl5).